The primary structure comprises 156 residues: Small ribosomal subunit protein uS7 (156 aa).

This sequence belongs to the universal ribosomal protein uS7 family. As to quaternary structure, part of the 30S ribosomal subunit. Contacts proteins S9 and S11.

One of the primary rRNA binding proteins, it binds directly to 16S rRNA where it nucleates assembly of the head domain of the 30S subunit. Is located at the subunit interface close to the decoding center, probably blocks exit of the E-site tRNA. This is Small ribosomal subunit protein uS7 from Chlorobaculum tepidum (strain ATCC 49652 / DSM 12025 / NBRC 103806 / TLS) (Chlorobium tepidum).